The primary structure comprises 439 residues: MLRFAPSPTGDMHIGNLRAAIFNYIVAKQQHKPFLIRIEDTDKERNIEGKDQEILEILKLMGMNWDKLVYQSHNIDYHREMAEKLLKENKAFYCYASVGFLEQEKEKAKNEKRPFRYLDEWAALEKNQHNTPVVRLKAPNHAVSFNDAIKKEVKFEPYELDSFVLLRKDKSPTYNFACACDDLLYEISLIIRGEDHVSNTPKQILIQQALGSNNPIIYAHLPIILDEASGKKMSKRDEASSVKWLLNQGFLPVAIVNYLITIGNKVPKEVFSLDEALEWFSLENLSNSPAHFNLKYLKHLNHQHLKRLDDEKLLELSQIKDRNLLGLLRLFIEECDTLLELKEKISLFLEPKDIVKTYENEDFKERCSILFNALKSMDFQAYKDFESFKKEAMRLSQLKGKDFFKPLRILLIGDSHGVELPLIFPYIQSHYQEILRLKA.

The 'HIGH' region signature appears at 6–16 (PSPTGDMHIGN). The short motif at 232 to 236 (KMSKR) is the 'KMSKS' region element. Lysine 235 contacts ATP.

This sequence belongs to the class-I aminoacyl-tRNA synthetase family. Glutamate--tRNA ligase type 1 subfamily. Monomer.

The protein localises to the cytoplasm. It carries out the reaction tRNA(Glu) + L-glutamate + ATP = L-glutamyl-tRNA(Glu) + AMP + diphosphate. In terms of biological role, catalyzes the attachment of glutamate to tRNA(Glu) in a two-step reaction: glutamate is first activated by ATP to form Glu-AMP and then transferred to the acceptor end of tRNA(Glu). In Helicobacter acinonychis (strain Sheeba), this protein is Glutamate--tRNA ligase 1.